Reading from the N-terminus, the 154-residue chain is Endoribonuclease YbeY (154 aa).

Zn(2+) contacts are provided by His-113, His-117, and His-123.

The protein belongs to the endoribonuclease YbeY family. Zn(2+) is required as a cofactor.

The protein resides in the cytoplasm. Single strand-specific metallo-endoribonuclease involved in late-stage 70S ribosome quality control and in maturation of the 3' terminus of the 16S rRNA. This chain is Endoribonuclease YbeY, found in Verminephrobacter eiseniae (strain EF01-2).